A 356-amino-acid polypeptide reads, in one-letter code: Histidinol-phosphate aminotransferase (356 aa).

An N6-(pyridoxal phosphate)lysine modification is found at lysine 214.

It belongs to the class-II pyridoxal-phosphate-dependent aminotransferase family. Histidinol-phosphate aminotransferase subfamily. In terms of assembly, homodimer. Requires pyridoxal 5'-phosphate as cofactor.

The enzyme catalyses L-histidinol phosphate + 2-oxoglutarate = 3-(imidazol-4-yl)-2-oxopropyl phosphate + L-glutamate. Its pathway is amino-acid biosynthesis; L-histidine biosynthesis; L-histidine from 5-phospho-alpha-D-ribose 1-diphosphate: step 7/9. This is Histidinol-phosphate aminotransferase from Escherichia coli (strain SMS-3-5 / SECEC).